The sequence spans 365 residues: DNA replication and repair protein RecF (365 aa).

Residue 30–37 coordinates ATP; it reads GLNAQGKT.

This sequence belongs to the RecF family.

It localises to the cytoplasm. The RecF protein is involved in DNA metabolism; it is required for DNA replication and normal SOS inducibility. RecF binds preferentially to single-stranded, linear DNA. It also seems to bind ATP. This Chlamydia trachomatis serovar L2b (strain UCH-1/proctitis) protein is DNA replication and repair protein RecF.